We begin with the raw amino-acid sequence, 576 residues long: MKESPLITLVKRHSETHFANIKYGYYVLIISLVYLIGLALLRAFGRRTPSRSSSAFKNKIIYRLYDIDPAIHLGILFFAVLVPFYYHYSLTTQSTVYLKRLGRLSYALIPLNLFLTLRPNWFLRKNCTYTDFIPFHKWFSRIITVIGLLHGIFFIIKWAIDDNVSLKQKLILKTFNFVGFIISILVLFLLICSIGPMRRYNYRLFYIVHNLVNVAFILLTPIHSRPGVKFPFLLLNCTLLFIHIINRIVFAKSLMILNKNANYSKTNLVHVRLPRAILPDYFEPGSHIRISPYRRINPLYWLLPSHPYTIASLAEDNSIDLIIKETSTAEPGSQIESLRSNPKSFHLDQEKNYTLINSYPPSVPEECYSQGTNIAIICGGSGISFALPLFRHFFNKENVKYLKMIWLIKNYSEYELVLDYLKTNGLTFEKKLSNNKRISVFISGEYTAETRLDEITTNIDDENSEYEMGSFNNEDEDLSISNFNSENADSNDNTPETSHSPTKENGSLIEVKSKHSFTLSNELKSFNNESAQVNQNETWLFSCGPPSLLQLSKKYCNDERINFSVRLTDYEGKRKE.

Transmembrane regions (helical) follow at residues 21–41 (IKYG…LALL), 70–90 (AIHL…HYSL), 101–118 (LGRL…LTLR), 142–162 (IITV…AIDD), 177–197 (FVGF…IGPM), 204–224 (LFYI…PIHS), and 230–250 (FPFL…RIVF). In terms of domain architecture, Ferric oxidoreductase spans 101 to 219 (LGRLSYALIP…NLVNVAFILL (119 aa)). Residues 250–388 (FAKSLMILNK…GGSGISFALP (139 aa)) enclose the FAD-binding FR-type domain. Residues 480–505 (ISNFNSENADSNDNTPETSHSPTKEN) show a composition bias toward polar residues. The segment at 480-507 (ISNFNSENADSNDNTPETSHSPTKENGS) is disordered.

The protein belongs to the ferric reductase (FRE) family. AIM14 subfamily. As to quaternary structure, interacts with ribosomes.

Its subcellular location is the membrane. In terms of biological role, probable cell surface metalloreductase. May be involved in iron or copper homeostasis. This Saccharomyces cerevisiae (strain Lalvin EC1118 / Prise de mousse) (Baker's yeast) protein is Probable metalloreductase AIM14 (AIM14).